The sequence spans 164 residues: Protein SprT (164 aa).

One can recognise a SprT-like domain in the interval 14–156 (QLAESFFKRP…LCRRCRQTLV (143 aa)). His-69 contacts Zn(2+). Glu-70 is an active-site residue. Zn(2+) is bound at residue His-73.

This sequence belongs to the SprT family. Zn(2+) is required as a cofactor.

The protein resides in the cytoplasm. This is Protein SprT from Pseudomonas fluorescens (strain ATCC BAA-477 / NRRL B-23932 / Pf-5).